We begin with the raw amino-acid sequence, 295 residues long: UDP-N-acetylenolpyruvoylglucosamine reductase (295 aa).

Residues 24–188 (KVGGNAEIFF…LKVIFKINKG (165 aa)) enclose the FAD-binding PCMH-type domain. Residue Arg168 is part of the active site. The active-site Proton donor is Ser217. Glu287 is a catalytic residue.

Belongs to the MurB family. FAD serves as cofactor.

It localises to the cytoplasm. It catalyses the reaction UDP-N-acetyl-alpha-D-muramate + NADP(+) = UDP-N-acetyl-3-O-(1-carboxyvinyl)-alpha-D-glucosamine + NADPH + H(+). It functions in the pathway cell wall biogenesis; peptidoglycan biosynthesis. Its function is as follows. Cell wall formation. This chain is UDP-N-acetylenolpyruvoylglucosamine reductase, found in Rickettsia rickettsii (strain Iowa).